Reading from the N-terminus, the 476-residue chain is Tryptophan--tRNA ligase, cytoplasmic (476 aa).

Residues 1-117 are dispensable to the catalytic activity; that stretch reads MADMSNGEQG…LIVRFGSSKI (117 aa). Residues 13–69 enclose the WHEP-TRS domain; the sequence is SPLELFHSIAAQGELVRDLKARNAAKDEIDSAVKMLLSLKTSYKAATGEDYKVDCPP. Residues 63-83 form a disordered region; that stretch reads YKVDCPPGDPAPESGEGLDAT. At Lys159 the chain carries N6-succinyllysine. Residues 169–178 carry the 'HIGH' region motif; that stretch reads PSSEAMHVGH. The short motif at 354 to 358 is the 'KMSKS' region element; sequence KMSAS. Ser356 is modified (phosphoserine).

The protein belongs to the class-I aminoacyl-tRNA synthetase family. In terms of assembly, homodimer. Interacts with oxidized form of GAPDH. Proteolytic cleavage generates 2 forms; T1-TrpRS and T2-TrpRS.

Its subcellular location is the cytoplasm. The enzyme catalyses tRNA(Trp) + L-tryptophan + ATP = L-tryptophyl-tRNA(Trp) + AMP + diphosphate + H(+). In terms of biological role, T1-TrpRS has aminoacylation activity while T2-TrpRS lacks it. T1-TrpRS and T2-TrpRS possess angiostatic activity. T2-TrpRS inhibits fluid shear stress-activated responses of endothelial cells. Regulates ERK, Akt, and eNOS activation pathways that are associated with angiogenesis, cytoskeletal reorganization and shear stress-responsive gene expression. This chain is Tryptophan--tRNA ligase, cytoplasmic (WARS1), found in Bos taurus (Bovine).